The following is a 267-amino-acid chain: MSQMLSPDMTIAAEAVTKAKIEVKNLNFYYGQSKALKDITLSLPERSVTAFIGPSGCGKSTLLRVFNRIYELYPKQTAEGQVLLDGQNVLDRSQDLNLLRTKIGMVFQKPTPFPMSIYENIAFGVRLYEKISKAEMDGRVEQALKRAALWTEVKDKLNASGLSLSGGQQQRLCIARTVAVKPEVILLDEPASALDPLSTAKIEELIDELQADYTIVIVTHNMQQAARVSKQTAFMYLGELVEFDRTEKIFTSPREKRTQDYITGRFG.

In terms of domain architecture, ABC transporter spans I21 to I262. G53–S60 contacts ATP.

It belongs to the ABC transporter superfamily. Phosphate importer (TC 3.A.1.7) family. The complex is composed of two ATP-binding proteins (PstB), two transmembrane proteins (PstC and PstA) and a solute-binding protein (PstS).

It localises to the cell inner membrane. The catalysed reaction is phosphate(out) + ATP + H2O = ADP + 2 phosphate(in) + H(+). Functionally, part of the ABC transporter complex PstSACB involved in phosphate import. Responsible for energy coupling to the transport system. The protein is Phosphate import ATP-binding protein PstB of Mesorhizobium japonicum (strain LMG 29417 / CECT 9101 / MAFF 303099) (Mesorhizobium loti (strain MAFF 303099)).